The primary structure comprises 317 residues: Protein phosphatase PTC7 homolog fig (317 aa).

The 267-residue stretch at 46 to 312 (PYLVTVVQGR…DDITLILASV (267 aa)) folds into the PPM-type phosphatase domain. Asp-90, Gly-91, and Asp-235 together coordinate Mn(2+).

This sequence belongs to the PP2C family. Mg(2+) is required as a cofactor. Mn(2+) serves as cofactor.

The catalysed reaction is O-phospho-L-seryl-[protein] + H2O = L-seryl-[protein] + phosphate. The enzyme catalyses O-phospho-L-threonyl-[protein] + H2O = L-threonyl-[protein] + phosphate. This is Protein phosphatase PTC7 homolog fig from Drosophila erecta (Fruit fly).